The sequence spans 677 residues: MATLHRQNAAGRRKVQVSYVIRDEVEKYNRNGVNALQLDPALNRLFTAGRDSIIRIWSVNQHKQDPYIASMEHHTDWVNDIILCCNGKTLISASSDTTVKVWNAHKGFCMSTLRTHKDYVKALAYAKDKELVASAGLDRQIFLWDVNTLTALTASNNTVTTSSLSGNKDSIYSLAMNQTGTVIISGSTEKVLRVWDPRTCAKLMKLKGHTDNVKSLLLNRDGTQCLSGSSDGTIRLWSLGQQRCIATYRVHDEGVWALQVNEAFTHIYSGGRDRKIYCTDLRNPDMRVLICEEKAPVLRMELDRSADPPQSIWVSTTKSFVNKWSLKAMHNFRASGDYDNDCSAPLTPLCTQPEQVIKGGTSIVQCHILNDKRHILTKDTNNSVAFWDVLKACKGEDLGKVDFDEEVKKRFKMVYVPNWFSVDLKTGMLTITLDESDCFAAWVAAKDAGFTSPDGSDPKLNLGGLLLQALLEFWPRTHINPMEEEENELNHVNGEQESRIQKGNGYFQVPPHTPVIFGEAGGRTLFRLLCRDSGGETESMLLNETVPQWVIDITVDKNMPKFNKIPFYLQPHSSSGAKTLKKDRLSASDMLQVRKVMEHVYEKIINLDTESQATSSSANDKPGEQEKEEDVSVMAEEKIELMCLDQVLDPNMDLRTVKHFIWKSGGDLTIHYRQKST.

WD repeat units lie at residues Tyr28–Tyr67, His73–Thr112, Thr115–Ala154, Gly166–Lys205, Gly208–Thr247, Val250–Leu289, Glu292–Ala334, and Lys358–Asp397. The disordered stretch occupies residues Ser611 to Ser632.

The protein belongs to the WD repeat WDR48 family.

Its subcellular location is the nucleus. The protein localises to the cytoplasm. It localises to the lysosome. It is found in the late endosome. In terms of biological role, regulator of deubiquitinating complexes, which acts as a strong activator of usp1, usp12 and usp46. Enhances the usp1-mediated deubiquitination of fancd2; usp1 being almost inactive by itself. Activates deubiquitination by increasing the catalytic turnover without increasing the affinity of deubiquitinating enzymes for the substrate. Also activates deubiquitinating activity of complexes containing usp12. Together with rad51ap1, promotes DNA repair by stimulating rad51-mediated homologous recombination. Binds single-stranded DNA (ssDNA) and double-stranded DNA (dsDNA). DNA-binding is required both for usp1-mediated deubiquitination of fancd2 and stimulation of rad51-mediated homologous recombination: both wdr48/uaf1 and rad51ap1 have coordinated role in DNA-binding during these processes. Together with atad5 and by regulating usp1 activity, has a role in pcna-mediated translesion synthesis (TLS) by deubiquitinating monoubiquitinated pcna. Together with atad5, has a role in recruiting rad51 to stalled forks during replication stress. The chain is WD repeat-containing protein 48 (wdr48) from Danio rerio (Zebrafish).